The chain runs to 191 residues: Recombination protein RecR (191 aa).

A C4-type zinc finger spans residues 51–66; that stretch reads CQTCFHLSADPECEIC. One can recognise a Toprim domain in the interval 74-168; the sequence is GVICVVADSR…SVSRIAYGLP (95 aa).

This sequence belongs to the RecR family.

Its function is as follows. May play a role in DNA repair. It seems to be involved in an RecBC-independent recombinational process of DNA repair. It may act with RecF and RecO. This is Recombination protein RecR from Synechococcus sp. (strain CC9605).